A 364-amino-acid polypeptide reads, in one-letter code: Homeobox protein Nkx-2.3 (364 aa).

The segment at 132–153 is disordered; that stretch reads GDCKAAEESERPKPRSRRKPRV. Positions 135–144 are enriched in basic and acidic residues; that stretch reads KAAEESERPK. Residues 148–207 constitute a DNA-binding region (homeobox); the sequence is RRKPRVLFSQAQVFELERRFKQQRYLSAPEREHLASSLKLTSTQVKIWFQNRRYKCKRQR.

The protein belongs to the NK-2 homeobox family.

It is found in the nucleus. Transcription factor. This is Homeobox protein Nkx-2.3 (NKX2-3) from Homo sapiens (Human).